Consider the following 144-residue polypeptide: Antigenic protein SchS21 (144 aa).

Asn-36 is a glycosylation site (N-linked (GlcNAc...) asparagine). Residues 91 to 105 (VKQMWPAESRKPMSG) form an igE-binding epitope region.

As to quaternary structure, homodimer. The cofactor is Mg(2+).

The protein resides in the secreted. In terms of biological role, has exodeoxyribonuclease activity with lambda-DNA and salmon testes dsDNA. No activity with circular plasmid DNA. The physiological role of this enzyme may be to degrade environmental DNA, and thus mobilize nitrogen for uptake. This Stachybotrys chartarum (Toxic black mold) protein is Antigenic protein SchS21.